A 165-amino-acid polypeptide reads, in one-letter code: Large ribosomal subunit protein uL10 (165 aa).

It belongs to the universal ribosomal protein uL10 family. As to quaternary structure, part of the ribosomal stalk of the 50S ribosomal subunit. The N-terminus interacts with L11 and the large rRNA to form the base of the stalk. The C-terminus forms an elongated spine to which L12 dimers bind in a sequential fashion forming a multimeric L10(L12)X complex.

Functionally, forms part of the ribosomal stalk, playing a central role in the interaction of the ribosome with GTP-bound translation factors. This Mycoplasma capricolum subsp. capricolum (strain California kid / ATCC 27343 / NCTC 10154) protein is Large ribosomal subunit protein uL10.